We begin with the raw amino-acid sequence, 441 residues long: Protein cortex (441 aa).

WD repeat units lie at residues 110-148, 149-187, 193-233, 235-276, 277-320, 345-379, and 380-420; these read SITS…VDQG, QTMF…QFVQ, IQIC…KSLV, IEGA…RFMK, TNEI…KLRQ, SLWS…ESHT, and GLNR…KILA. The D-box signature appears at 379 to 390; that stretch reads TGLNRIRTMVFS.

The protein belongs to the WD repeat CORT family.

The protein localises to the cytoplasm. In terms of biological role, controls wing pigmentation patterning, possibly by regulating scale cell development. Probably acts as an activator of the anaphase promoting complex/cyclosome (APC/C) that promotes the ubiquitin ligase activity and substrate specificity of the APC/C. In Biston betularia (Pepper-and-salt geometer moth), this protein is Protein cortex.